Here is a 291-residue protein sequence, read N- to C-terminus: Malectin (291 aa).

The N-terminal stretch at 1–30 is a signal peptide; it reads MLRPRGAEGTAVALLRLLLLLLLLGPKLRG. The Lumenal portion of the chain corresponds to 31–268; sequence PGLGVVGAAG…TPNPYASDNS (238 aa). A carbohydrate-binding residues include Tyr81, Tyr103, Tyr130, Phe131, and Asp200. The tract at residues 220-264 is disordered; that stretch reads LQPHPGLEKKEEEEEEEEYDEGSNLKRQTNKNRVQSGPRTPNPYA. The span at 230–240 shows a compositional bias: acidic residues; the sequence is EEEEEEEEYDE. Positions 244–264 are enriched in polar residues; it reads LKRQTNKNRVQSGPRTPNPYA. Asn267 carries an N-linked (GlcNAc...) asparagine glycan. The chain crosses the membrane as a helical span at residues 269 to 289; that stretch reads SLMFPILVAFGVFIPTLFCLC. Residues 290–291 are Cytoplasmic-facing; it reads RL.

Belongs to the malectin family. Interacts with the oligosaccharyltransferase (OST) complex.

It is found in the endoplasmic reticulum membrane. Its function is as follows. Carbohydrate-binding protein with a strong ligand preference for Glc2-N-glycan. May play a role in the early steps of protein N-glycosylation. This chain is Malectin, found in Mus musculus (Mouse).